A 388-amino-acid chain; its full sequence is uncharacterized protein (388 aa).

Transmembrane regions (helical) follow at residues 15 to 37 (VISAFLSISLFEGFVILTLLLVL), 97 to 119 (GFSKIFPKLLLGISLILLPVVFY), 129 to 151 (PIWGGTFEVGFFYALFSITTFLL), 158 to 175 (FIYIPLFLLFLAVIFLSA), 179 to 196 (MMLAFFVIFYLILFVLFK), 203 to 225 (LAFWSVNFLIILSFIGGYVYLSQ), 304 to 326 (IFIVSEFIERGILGLLGILYIYF), and 347 to 369 (LLSVPLGLHLIQSVFTFFWDALL).

It is found in the cell membrane. This is an uncharacterized protein from Aquifex aeolicus (strain VF5).